The sequence spans 439 residues: Chromosomal replication initiator protein DnaA (439 aa).

The segment at 1 to 72 is domain I, interacts with DnaA modulators; sequence MEQFSAFKLL…SKLYDDIRAV (72 aa). The segment at 72 to 99 is domain II; that stretch reads VRFVNEQDFFINLAKLEEDNRETLYQSS. Residues 100–322 form a domain III, AAA+ region region; that stretch reads GLSKNFTFKN…GIATKLLFYV (223 aa). ATP is bound by residues G144, G146, K147, and T148. Residues 323–439 form a domain IV, binds dsDNA region; sequence KTTKQNLINN…LQDIITSLVI (117 aa).

Belongs to the DnaA family. In terms of assembly, oligomerizes as a right-handed, spiral filament on DNA at oriC.

Its subcellular location is the cytoplasm. Its function is as follows. Plays an essential role in the initiation and regulation of chromosomal replication. ATP-DnaA binds to the origin of replication (oriC) to initiate formation of the DNA replication initiation complex once per cell cycle. Binds the DnaA box (a 9 base pair repeat at the origin) and separates the double-stranded (ds)DNA. Forms a right-handed helical filament on oriC DNA; dsDNA binds to the exterior of the filament while single-stranded (ss)DNA is stabiized in the filament's interior. The ATP-DnaA-oriC complex binds and stabilizes one strand of the AT-rich DNA unwinding element (DUE), permitting loading of DNA polymerase. After initiation quickly degrades to an ADP-DnaA complex that is not apt for DNA replication. Binds acidic phospholipids. The sequence is that of Chromosomal replication initiator protein DnaA from Mycoplasma pneumoniae (strain ATCC 29342 / M129 / Subtype 1) (Mycoplasmoides pneumoniae).